A 225-amino-acid chain; its full sequence is NAD(P)H-quinone oxidoreductase subunit K, chloroplastic (225 aa).

[4Fe-4S] cluster is bound by residues C43, C44, C108, and C139.

Belongs to the complex I 20 kDa subunit family. In terms of assembly, NDH is composed of at least 16 different subunits, 5 of which are encoded in the nucleus. Requires [4Fe-4S] cluster as cofactor.

It is found in the plastid. Its subcellular location is the chloroplast thylakoid membrane. It catalyses the reaction a plastoquinone + NADH + (n+1) H(+)(in) = a plastoquinol + NAD(+) + n H(+)(out). It carries out the reaction a plastoquinone + NADPH + (n+1) H(+)(in) = a plastoquinol + NADP(+) + n H(+)(out). NDH shuttles electrons from NAD(P)H:plastoquinone, via FMN and iron-sulfur (Fe-S) centers, to quinones in the photosynthetic chain and possibly in a chloroplast respiratory chain. The immediate electron acceptor for the enzyme in this species is believed to be plastoquinone. Couples the redox reaction to proton translocation, and thus conserves the redox energy in a proton gradient. The sequence is that of NAD(P)H-quinone oxidoreductase subunit K, chloroplastic from Illicium oligandrum (Star anise).